The primary structure comprises 357 residues: UDP-N-acetylglucosamine--N-acetylmuramyl-(pentapeptide) pyrophosphoryl-undecaprenol N-acetylglucosamine transferase (357 aa).

UDP-N-acetyl-alpha-D-glucosamine is bound by residues 15-17 (TGG), Asn124, Arg165, Ser194, and Gln288.

The protein belongs to the glycosyltransferase 28 family. MurG subfamily.

It is found in the cell inner membrane. It catalyses the reaction di-trans,octa-cis-undecaprenyl diphospho-N-acetyl-alpha-D-muramoyl-L-alanyl-D-glutamyl-meso-2,6-diaminopimeloyl-D-alanyl-D-alanine + UDP-N-acetyl-alpha-D-glucosamine = di-trans,octa-cis-undecaprenyl diphospho-[N-acetyl-alpha-D-glucosaminyl-(1-&gt;4)]-N-acetyl-alpha-D-muramoyl-L-alanyl-D-glutamyl-meso-2,6-diaminopimeloyl-D-alanyl-D-alanine + UDP + H(+). It functions in the pathway cell wall biogenesis; peptidoglycan biosynthesis. Cell wall formation. Catalyzes the transfer of a GlcNAc subunit on undecaprenyl-pyrophosphoryl-MurNAc-pentapeptide (lipid intermediate I) to form undecaprenyl-pyrophosphoryl-MurNAc-(pentapeptide)GlcNAc (lipid intermediate II). This chain is UDP-N-acetylglucosamine--N-acetylmuramyl-(pentapeptide) pyrophosphoryl-undecaprenol N-acetylglucosamine transferase, found in Nostoc sp. (strain PCC 7120 / SAG 25.82 / UTEX 2576).